Here is a 585-residue protein sequence, read N- to C-terminus: MSATSVDQRPKGQGNKVSVQNGSIHQKDAVNDDDFEPYLSSQTNQSNSYPPMSDPYMPSYYAPSIGFPYSLGEAAWSTAGDQPMPYLTTYGQMSNGEHHYIPDGVFSQPGALGNTPPFLGQHGFNFFPGNADFSTWGTSGSQGQSTQSSAYSSSYGYPPSSLGRAITDGQAGFGNDTLSKVPGISSIEQGMTGLKIGGDLTAAVTKTVGTALSSSGMTSIATNSVPPVSSAAPKPTSWAAIARKPAKPQPKLKPKGNVGIGGSAVPPPPIKHNMNIGTWDEKGSVVKAPPTQPVLPPQTIIQQPQPLIQPPPLVQSQLPQQQPQPPQPQQQQGPQPQAQPHQVQPQQQQLQNRWVAPRNRGAGFNQNNGAGSENFGLGVVPVSASPSSVEVHPVLEKLKAINNYNPKDFDWNLKNGRVFIIKSYSEDDIHRSIKYSIWCSTEHGNKRLDAAYRSLNGKGPLYLLFSVNGSGHFCGVAEMKSVVDYNAYAGVWSQDKWKGKFEVKWIFVKDVPNNQLRHIRLENNDNKPVTNSRDTQEVPLEKAKQVLKIIATFKHTTSIFDDFAHYEKRQEEEEAMRRERNRNKQ.

Disordered stretches follow at residues 1–52 (MSAT…YPPM), 243–277 (RKPAKPQPKLKPKGNVGIGGSAVPPPPIKHNMNIG), and 304–351 (PQPL…QQLQ). Ser2 is subject to N-acetylserine. Residues 15–24 (NKVSVQNGSI) show a composition bias toward polar residues. Ser23 carries the phosphoserine modification. Residues 244–254 (KPAKPQPKLKP) are compositionally biased toward basic residues. Residues 329-351 (QQQQGPQPQAQPHQVQPQQQQLQ) are compositionally biased toward low complexity. A YTH domain is found at 416–550 (GRVFIIKSYS…EKAKQVLKII (135 aa)). RNA is bound by residues 422-424 (KSY), Asp428, 438-439 (WC), Asn468, Trp492, and Trp497.

Belongs to the YTHDF family. YTHDF3 subfamily. As to quaternary structure, interacts with CNOT1; promoting recruitment of the CCR4-NOT complex. Interacts with YTHDF1. Interacts with YTHDF2. Interacts with PAN3. (Microbial infection) Proteolytically cleaved by HIV-1 protease when incorporated into HIV-1 particles in a nucleocapsid-dependent-manner. Cleavage by HIV-1 protease probably ensures optimal infectivity of the mature virion.

The protein localises to the cytoplasm. The protein resides in the cytosol. It is found in the P-body. It localises to the stress granule. Specifically recognizes and binds N6-methyladenosine (m6A)-containing RNAs, and regulates their stability. M6A is a modification present at internal sites of mRNAs and some non-coding RNAs and plays a role in mRNA stability and processing. Acts as a regulator of mRNA stability by promoting degradation of m6A-containing mRNAs via interaction with the CCR4-NOT complex or PAN3. The YTHDF paralogs (YTHDF1, YTHDF2 and YTHDF3) share m6A-containing mRNAs targets and act redundantly to mediate mRNA degradation and cellular differentiation. Acts as a negative regulator of type I interferon response by down-regulating interferon-stimulated genes (ISGs) expression: acts by binding to FOXO3 mRNAs. Binds to FOXO3 mRNAs independently of METTL3-mediated m6A modification. Can also act as a regulator of mRNA stability in cooperation with YTHDF2 by binding to m6A-containing mRNA and promoting their degradation. Recognizes and binds m6A-containing circular RNAs (circRNAs); circRNAs are generated through back-splicing of pre-mRNAs, a non-canonical splicing process promoted by dsRNA structures across circularizing exons. Promotes formation of phase-separated membraneless compartments, such as P-bodies or stress granules, by undergoing liquid-liquid phase separation upon binding to mRNAs containing multiple m6A-modified residues: polymethylated mRNAs act as a multivalent scaffold for the binding of YTHDF proteins, juxtaposing their disordered regions and thereby leading to phase separation. The resulting mRNA-YTHDF complexes then partition into different endogenous phase-separated membraneless compartments, such as P-bodies, stress granules or neuronal RNA granules. May also recognize and bind N1-methyladenosine (m1A)-containing mRNAs: inhibits trophoblast invasion by binding to m1A-methylated transcripts of IGF1R, promoting their degradation. In terms of biological role, has some antiviral activity against HIV-1 virus: incorporated into HIV-1 particles in a nucleocapsid-dependent manner and reduces viral infectivity in the next cycle of infection. May interfere with this early step of the viral life cycle by binding to N6-methyladenosine (m6A) modified sites on the HIV-1 RNA genome. This is YTH domain-containing family protein 3 from Homo sapiens (Human).